Here is a 649-residue protein sequence, read N- to C-terminus: Solute carrier family 22 member 16 (649 aa).

Residues 19-39 (FQIVLYLICAYQSLSCGIHYL) form a helical membrane-spanning segment. Residues Asn65 and Asn108 are each glycosylated (N-linked (GlcNAc...) asparagine). 5 consecutive transmembrane segments (helical) span residues 156–176 (MIQP…SYLS), 190–210 (IGVF…SFMI), 214–234 (FLVM…MEII), 244–264 (IHLN…SYLL), and 268–288 (WLYQ…CWML). Asn315 carries N-linked (GlcNAc...) asparagine glycosylation. Helical transmembrane passes span 356–376 (AKMT…YYMF), 389–409 (LYLL…CIWL), 417–437 (TMLL…VMPS), 445–465 (MVAL…YLYT), 475–495 (CLAV…IPFT), and 501–521 (VWIF…GLLS). Positions 530–544 (TPMKSTWETTEQQVP) are enriched in polar residues. 2 disordered regions span residues 530-560 (TPMK…SFER) and 579-649 (SPDA…LGGF).

This sequence belongs to the major facilitator (TC 2.A.1) superfamily. Organic cation transporter (TC 2.A.1.19) family.

The protein localises to the cell membrane. It carries out the reaction (R)-carnitine(in) = (R)-carnitine(out). The enzyme catalyses spermidine(in) = spermidine(out). Functionally, facilitative organic cation transporter that mediates the transport of carnitine as well as the polyamine spermidine. Mediates the partially Na(+)-dependent bidirectional transport of carnitine. May mediate L-carnitine secretion from testis epididymal epithelium into the lumen which is involved in the maturation of spermatozoa. The chain is Solute carrier family 22 member 16 from Mus musculus (Mouse).